A 701-amino-acid chain; its full sequence is Polyribonucleotide nucleotidyltransferase (701 aa).

Positions 487 and 493 each coordinate Mg(2+). The KH domain occupies 554–613; sequence PTMLQMKIDSDKIRDVIGKGGATIRAICEETKASIDIEDDGSVKIYGETKEAAEAAKQRV. The region spanning 623-691 is the S1 motif domain; the sequence is GKIYVGKVER…NRGRIKLSIK (69 aa).

This sequence belongs to the polyribonucleotide nucleotidyltransferase family. In terms of assembly, component of the RNA degradosome, which is a multiprotein complex involved in RNA processing and mRNA degradation. Requires Mg(2+) as cofactor.

The protein localises to the cytoplasm. The enzyme catalyses RNA(n+1) + phosphate = RNA(n) + a ribonucleoside 5'-diphosphate. In terms of biological role, involved in mRNA degradation. Catalyzes the phosphorolysis of single-stranded polyribonucleotides processively in the 3'- to 5'-direction. The sequence is that of Polyribonucleotide nucleotidyltransferase from Pseudomonas paraeruginosa (strain DSM 24068 / PA7) (Pseudomonas aeruginosa (strain PA7)).